The chain runs to 478 residues: Proline--tRNA ligase (478 aa).

The protein belongs to the class-II aminoacyl-tRNA synthetase family. ProS type 3 subfamily. As to quaternary structure, homodimer.

The protein localises to the cytoplasm. The catalysed reaction is tRNA(Pro) + L-proline + ATP = L-prolyl-tRNA(Pro) + AMP + diphosphate. Catalyzes the attachment of proline to tRNA(Pro) in a two-step reaction: proline is first activated by ATP to form Pro-AMP and then transferred to the acceptor end of tRNA(Pro). This chain is Proline--tRNA ligase, found in Oceanobacillus iheyensis (strain DSM 14371 / CIP 107618 / JCM 11309 / KCTC 3954 / HTE831).